Consider the following 121-residue polypeptide: NADPH-dependent 7-cyano-7-deazaguanine reductase (121 aa).

Catalysis depends on cysteine 36, which acts as the Thioimide intermediate. Aspartate 43 serves as the catalytic Proton donor. Residues 58-60 and 77-78 contribute to the substrate site; these read VEL and YE.

The protein belongs to the GTP cyclohydrolase I family. QueF type 1 subfamily.

It is found in the cytoplasm. The catalysed reaction is 7-aminomethyl-7-carbaguanine + 2 NADP(+) = 7-cyano-7-deazaguanine + 2 NADPH + 3 H(+). It functions in the pathway tRNA modification; tRNA-queuosine biosynthesis. Functionally, catalyzes the NADPH-dependent reduction of 7-cyano-7-deazaguanine (preQ0) to 7-aminomethyl-7-deazaguanine (preQ1). The chain is NADPH-dependent 7-cyano-7-deazaguanine reductase from Rhodopirellula baltica (strain DSM 10527 / NCIMB 13988 / SH1).